The primary structure comprises 156 residues: Protein-export protein SecB (156 aa).

This sequence belongs to the SecB family. In terms of assembly, homotetramer, a dimer of dimers. One homotetramer interacts with 1 SecA dimer.

It localises to the cytoplasm. Functionally, one of the proteins required for the normal export of preproteins out of the cell cytoplasm. It is a molecular chaperone that binds to a subset of precursor proteins, maintaining them in a translocation-competent state. It also specifically binds to its receptor SecA. The protein is Protein-export protein SecB of Aeromonas hydrophila subsp. hydrophila (strain ATCC 7966 / DSM 30187 / BCRC 13018 / CCUG 14551 / JCM 1027 / KCTC 2358 / NCIMB 9240 / NCTC 8049).